The sequence spans 399 residues: C-type lectin domain family 4 member M (399 aa).

Residues 1–49 lie on the Cytoplasmic side of the membrane; the sequence is MSDSKEQRVQPLGLLEEDPTTSGIRLFPRDFQFQQTHGHKSSTGCLGHG. Positions 14-15 match the Endocytosis signal motif; sequence LL. A helical; Signal-anchor for type II membrane protein transmembrane segment spans residues 50–70; the sequence is PLVLQLLSFTLLAGVLVAILV. Residues 71–399 are Extracellular-facing; that stretch reads QVYKVPSSLS…KKPTACFRDE (329 aa). Asn-92 is a glycosylation site (N-linked (GlcNAc...) asparagine). 7 consecutive repeat copies span residues 108–130, 131–153, 154–176, 177–199, 200–222, 223–245, and 246–268. A 7 X approximate tandem repeats region spans residues 108 to 269; it reads KLQEIYQELI…AFERLCCRCP (162 aa). 4 disulfide bridges follow: Cys-265-Cys-395, Cys-268-Cys-279, Cys-296-Cys-389, and Cys-368-Cys-381. The 117-residue stretch at 274–390 folds into the C-type lectin domain; sequence FFQGNCYFIS…CNVDNYWICK (117 aa). 6 residues coordinate Ca(2+): Glu-359, Asn-361, Ser-363, Glu-366, Asn-377, and Asp-378. Residue Asn-361 is glycosylated (N-linked (GlcNAc...) asparagine).

Homotetramer.

The protein resides in the membrane. Functionally, probable pathogen-recognition receptor involved in peripheral immune surveillance in liver. May mediate the endocytosis of pathogens which are subsequently degraded in lysosomal compartments. Probably recognizes in a calcium-dependent manner high mannose N-linked oligosaccharides in a variety of pathogen antigens. Is a receptor for ICAM3, probably by binding to mannose-like carbohydrates. This is C-type lectin domain family 4 member M (CLEC4M) from Hylobates lar (Lar gibbon).